Reading from the N-terminus, the 255-residue chain is Hydroxyacylglutathione hydrolase (255 aa).

Residues histidine 56, histidine 58, aspartate 60, histidine 61, histidine 114, aspartate 133, and histidine 171 each coordinate Zn(2+).

The protein belongs to the metallo-beta-lactamase superfamily. Glyoxalase II family. As to quaternary structure, monomer. The cofactor is Zn(2+).

It carries out the reaction an S-(2-hydroxyacyl)glutathione + H2O = a 2-hydroxy carboxylate + glutathione + H(+). It participates in secondary metabolite metabolism; methylglyoxal degradation; (R)-lactate from methylglyoxal: step 2/2. Functionally, thiolesterase that catalyzes the hydrolysis of S-D-lactoyl-glutathione to form glutathione and D-lactic acid. This Nitrobacter winogradskyi (strain ATCC 25391 / DSM 10237 / CIP 104748 / NCIMB 11846 / Nb-255) protein is Hydroxyacylglutathione hydrolase.